The chain runs to 406 residues: COP9 signalosome complex subunit 4 (406 aa).

Ala2 bears the N-acetylalanine mark. N6-acetyllysine is present on Lys25. A PCI domain is found at 197–366; the sequence is YRRKFIEAAQ…GIVHFETREA (170 aa).

Belongs to the CSN4 family. Component of the CSN complex, composed of COPS1/GPS1, COPS2, COPS3, COPS4, COPS5, COPS6, COPS7 (COPS7A or COPS7B), COPS8 and COPS9. In the complex, it probably interacts directly with COPS1, COPS2, COPS3, COPS5, COPS6, COPS7 (COPS7A or COPS7B) and COPS8. Interacts with TOR1A; the interaction is direct and associates TOR1A and SNAPIN with the CSN complex. Interacts with STON2; controls STON2 neddylation levels. Interacts with ERCC6.

It localises to the cytoplasm. The protein localises to the nucleus. The protein resides in the cytoplasmic vesicle. It is found in the secretory vesicle. Its subcellular location is the synaptic vesicle. Component of the COP9 signalosome complex (CSN), a complex involved in various cellular and developmental processes. The CSN complex is an essential regulator of the ubiquitin (Ubl) conjugation pathway by mediating the deneddylation of the cullin subunits of SCF-type E3 ligase complexes, leading to decrease the Ubl ligase activity of SCF-type complexes such as SCF, CSA or DDB2. Also involved in the deneddylation of non-cullin subunits such as STON2. The complex is also involved in phosphorylation of p53/TP53, c-jun/JUN, IkappaBalpha/NFKBIA, ITPK1, IRF8/ICSBP and SNAPIN, possibly via its association with CK2 and PKD kinases. CSN-dependent phosphorylation of TP53 and JUN promotes and protects degradation by the Ubl system, respectively. This Mus musculus (Mouse) protein is COP9 signalosome complex subunit 4 (Cops4).